Reading from the N-terminus, the 602-residue chain is Aspartate--tRNA(Asp/Asn) ligase (602 aa).

Residue E175 coordinates L-aspartate. The segment at 199–202 (QIFK) is aspartate. R221 serves as a coordination point for L-aspartate. Residues 221 to 223 (RDE) and Q230 each bind ATP. An L-aspartate-binding site is contributed by H458. E492 lines the ATP pocket. R499 provides a ligand contact to L-aspartate. Position 544-547 (544-547 (GLDR)) interacts with ATP.

The protein belongs to the class-II aminoacyl-tRNA synthetase family. Type 1 subfamily. Homodimer.

It localises to the cytoplasm. It carries out the reaction tRNA(Asx) + L-aspartate + ATP = L-aspartyl-tRNA(Asx) + AMP + diphosphate. Aspartyl-tRNA synthetase with relaxed tRNA specificity since it is able to aspartylate not only its cognate tRNA(Asp) but also tRNA(Asn). Reaction proceeds in two steps: L-aspartate is first activated by ATP to form Asp-AMP and then transferred to the acceptor end of tRNA(Asp/Asn). The sequence is that of Aspartate--tRNA(Asp/Asn) ligase from Cupriavidus taiwanensis (strain DSM 17343 / BCRC 17206 / CCUG 44338 / CIP 107171 / LMG 19424 / R1) (Ralstonia taiwanensis (strain LMG 19424)).